We begin with the raw amino-acid sequence, 186 residues long: Elongation factor P (186 aa).

This sequence belongs to the elongation factor P family.

It localises to the cytoplasm. It participates in protein biosynthesis; polypeptide chain elongation. Its function is as follows. Involved in peptide bond synthesis. Stimulates efficient translation and peptide-bond synthesis on native or reconstituted 70S ribosomes in vitro. Probably functions indirectly by altering the affinity of the ribosome for aminoacyl-tRNA, thus increasing their reactivity as acceptors for peptidyl transferase. In Cupriavidus necator (strain ATCC 17699 / DSM 428 / KCTC 22496 / NCIMB 10442 / H16 / Stanier 337) (Ralstonia eutropha), this protein is Elongation factor P.